The following is a 332-amino-acid chain: Sesquiterpene synthase MBR_10393 (332 aa).

Mg(2+) contacts are provided by Asp-91 and Asp-96. The DDXXXD motif motif lies at 91-96; the sequence is DDLFVD. Substrate is bound at residue Arg-184. Residues Asn-230, Ser-234, and Glu-238 each coordinate Mg(2+).

Belongs to the terpene synthase family. The cofactor is Mg(2+).

The enzyme catalyses (2E,6E)-farnesyl diphosphate + H2O = (+)-corvol ether B + diphosphate. The catalysed reaction is (2E,6E)-farnesyl diphosphate + H2O = (+)-corvol ether A + diphosphate. In terms of biological role, terpene synthase that catalyzes the conversion of (2E,6E)-farnesyl diphosphate (FPP) into sesquiterpenes which are important for fungi-environment interactions. Produces a mixture consisting of 8 sesquiterpenes including corvol ethers A and B, as well as traces of epizonarene, gamma-cadinene, delta-cadinene, alpha-cadinene, alpha-cadinol, and an unidentified sesquiterpene. The major product is corvol ether B. The polypeptide is Sesquiterpene synthase MBR_10393 (Metarhizium brunneum (strain ARSEF 3297)).